We begin with the raw amino-acid sequence, 401 residues long: Argininosuccinate synthase (401 aa).

9 to 17 contributes to the ATP binding site; it reads AYSGGLDTS. Tyr86 contributes to the L-citrulline binding site. Gly116 is an ATP binding site. Residues Thr118, Asn122, and Asp123 each coordinate L-aspartate. Asn122 is a binding site for L-citrulline. L-citrulline-binding residues include Arg126, Ser174, Ser183, Glu259, and Tyr271.

Belongs to the argininosuccinate synthase family. Type 1 subfamily. Homotetramer.

It is found in the cytoplasm. The catalysed reaction is L-citrulline + L-aspartate + ATP = 2-(N(omega)-L-arginino)succinate + AMP + diphosphate + H(+). Its pathway is amino-acid biosynthesis; L-arginine biosynthesis; L-arginine from L-ornithine and carbamoyl phosphate: step 2/3. The sequence is that of Argininosuccinate synthase from Bacillus thuringiensis (strain Al Hakam).